A 90-amino-acid chain; its full sequence is UPF0237 protein PAE3582 (90 aa).

In terms of domain architecture, ACT spans 5–74; that stretch reads VVSVLGADRV…LEEEGKRLGV (70 aa).

Belongs to the UPF0237 family.

The polypeptide is UPF0237 protein PAE3582 (Pyrobaculum aerophilum (strain ATCC 51768 / DSM 7523 / JCM 9630 / CIP 104966 / NBRC 100827 / IM2)).